The following is a 76-amino-acid chain: ATP synthase subunit c (76 aa).

A run of 2 helical transmembrane segments spans residues 8–28 (LLAA…GVGI) and 55–75 (VAFA…LIFV).

Belongs to the ATPase C chain family. As to quaternary structure, F-type ATPases have 2 components, F(1) - the catalytic core - and F(0) - the membrane proton channel. F(1) has five subunits: alpha(3), beta(3), gamma(1), delta(1), epsilon(1). F(0) has three main subunits: a(1), b(2) and c(10-14). The alpha and beta chains form an alternating ring which encloses part of the gamma chain. F(1) is attached to F(0) by a central stalk formed by the gamma and epsilon chains, while a peripheral stalk is formed by the delta and b chains.

Its subcellular location is the cell membrane. In terms of biological role, f(1)F(0) ATP synthase produces ATP from ADP in the presence of a proton or sodium gradient. F-type ATPases consist of two structural domains, F(1) containing the extramembraneous catalytic core and F(0) containing the membrane proton channel, linked together by a central stalk and a peripheral stalk. During catalysis, ATP synthesis in the catalytic domain of F(1) is coupled via a rotary mechanism of the central stalk subunits to proton translocation. Functionally, key component of the F(0) channel; it plays a direct role in translocation across the membrane. A homomeric c-ring of between 10-14 subunits forms the central stalk rotor element with the F(1) delta and epsilon subunits. The polypeptide is ATP synthase subunit c (Dehalococcoides mccartyi (strain ATCC BAA-2266 / KCTC 15142 / 195) (Dehalococcoides ethenogenes (strain 195))).